The chain runs to 351 residues: Magnesium-protoporphyrin IX monomethyl ester [oxidative] cyclase 1 (351 aa).

The protein belongs to the AcsF family. The cofactor is Fe cation.

It catalyses the reaction Mg-protoporphyrin IX 13-monomethyl ester + 3 NADPH + 3 O2 + 2 H(+) = 3,8-divinyl protochlorophyllide a + 3 NADP(+) + 5 H2O. It functions in the pathway porphyrin-containing compound metabolism; chlorophyll biosynthesis (light-independent). In terms of biological role, catalyzes the formation of the isocyclic ring in chlorophyll biosynthesis. Mediates the cyclase reaction, which results in the formation of divinylprotochlorophyllide (Pchlide) characteristic of all chlorophylls from magnesium-protoporphyrin IX 13-monomethyl ester (MgPMME). This chain is Magnesium-protoporphyrin IX monomethyl ester [oxidative] cyclase 1, found in Nostoc sp. (strain PCC 7120 / SAG 25.82 / UTEX 2576).